The chain runs to 105 residues: Small ribosomal subunit protein uS10 (105 aa).

This sequence belongs to the universal ribosomal protein uS10 family. As to quaternary structure, part of the 30S ribosomal subunit.

In terms of biological role, involved in the binding of tRNA to the ribosomes. This Anaplasma phagocytophilum (strain HZ) protein is Small ribosomal subunit protein uS10.